A 591-amino-acid polypeptide reads, in one-letter code: Aspartate--tRNA ligase (591 aa).

E172 is a binding site for L-aspartate. The tract at residues 196 to 199 is aspartate; that stretch reads QLFK. R218 lines the L-aspartate pocket. Residues 218 to 220 and Q227 contribute to the ATP site; that span reads RDE. H449 lines the L-aspartate pocket. E483 serves as a coordination point for ATP. L-aspartate is bound at residue R490. 535-538 lines the ATP pocket; sequence GLDR.

Belongs to the class-II aminoacyl-tRNA synthetase family. Type 1 subfamily. In terms of assembly, homodimer.

The protein localises to the cytoplasm. The catalysed reaction is tRNA(Asp) + L-aspartate + ATP = L-aspartyl-tRNA(Asp) + AMP + diphosphate. In terms of biological role, catalyzes the attachment of L-aspartate to tRNA(Asp) in a two-step reaction: L-aspartate is first activated by ATP to form Asp-AMP and then transferred to the acceptor end of tRNA(Asp). The sequence is that of Aspartate--tRNA ligase from Actinobacillus pleuropneumoniae serotype 7 (strain AP76).